A 326-amino-acid chain; its full sequence is MKSIAIIGASGYTGAQITSLIDADKNLVIQGLYVSENSVDKGKPLSELYPTYSHISLPLSPLSDEAKALIAEQADGVVLATDHAVSLHLAAWFFEQGLTVFDLSGAYRFSDKSQYPQWYGFEHDYPQVLSHAVYGLAEWNGADIADSKMIAVPGCYPTASLTALKPIHSLMTSSLPVINAVSGVTGAGRKAQLNTSFCEVSLTPYGVLGHRHQPEIATQLGQEVIFTPHLGNFKRGILATITVQLKEGVTQADIEQAYAIYDNAPLVTVKQNQFPKVDDVTNTPNCHLGWKFDPKTGYLVVASAIDNLMKGAASQAHQCIKIHFKY.

The active site involves Cys-155.

The protein belongs to the NAGSA dehydrogenase family. Type 1 subfamily.

It is found in the cytoplasm. The catalysed reaction is N-acetyl-L-glutamate 5-semialdehyde + phosphate + NADP(+) = N-acetyl-L-glutamyl 5-phosphate + NADPH + H(+). It functions in the pathway amino-acid biosynthesis; L-arginine biosynthesis; N(2)-acetyl-L-ornithine from L-glutamate: step 3/4. Functionally, catalyzes the NADPH-dependent reduction of N-acetyl-5-glutamyl phosphate to yield N-acetyl-L-glutamate 5-semialdehyde. In Shewanella woodyi (strain ATCC 51908 / MS32), this protein is N-acetyl-gamma-glutamyl-phosphate reductase.